Reading from the N-terminus, the 117-residue chain is Large ribosomal subunit protein bL20c (117 aa).

This sequence belongs to the bacterial ribosomal protein bL20 family.

The protein resides in the plastid. Its subcellular location is the chloroplast. Binds directly to 23S ribosomal RNA and is necessary for the in vitro assembly process of the 50S ribosomal subunit. It is not involved in the protein synthesizing functions of that subunit. The chain is Large ribosomal subunit protein bL20c from Chloranthus spicatus (Chulantree).